Reading from the N-terminus, the 219-residue chain is Large ribosomal subunit protein uL1 (219 aa).

Belongs to the universal ribosomal protein uL1 family. Component of the large ribosomal subunit.

The protein localises to the cytoplasm. In Encephalitozoon cuniculi (strain GB-M1) (Microsporidian parasite), this protein is Large ribosomal subunit protein uL1 (RPL1).